A 406-amino-acid polypeptide reads, in one-letter code: Phosphopentomutase (406 aa).

Residues D10, D305, H310, D346, H347, and H358 each contribute to the Mn(2+) site.

Belongs to the phosphopentomutase family. Mn(2+) is required as a cofactor.

The protein localises to the cytoplasm. The enzyme catalyses 2-deoxy-alpha-D-ribose 1-phosphate = 2-deoxy-D-ribose 5-phosphate. It carries out the reaction alpha-D-ribose 1-phosphate = D-ribose 5-phosphate. The protein operates within carbohydrate degradation; 2-deoxy-D-ribose 1-phosphate degradation; D-glyceraldehyde 3-phosphate and acetaldehyde from 2-deoxy-alpha-D-ribose 1-phosphate: step 1/2. Functionally, isomerase that catalyzes the conversion of deoxy-ribose 1-phosphate (dRib-1-P) and ribose 1-phosphate (Rib-1-P) to deoxy-ribose 5-phosphate (dRib-5-P) and ribose 5-phosphate (Rib-5-P), respectively. This chain is Phosphopentomutase, found in Methylobacterium radiotolerans (strain ATCC 27329 / DSM 1819 / JCM 2831 / NBRC 15690 / NCIMB 10815 / 0-1).